The chain runs to 261 residues: Cytochrome c oxidase subunit 3 (261 aa).

Residues 1 to 15 (MAHQSHAYHMVKPSP) lie on the Mitochondrial matrix side of the membrane. A helical transmembrane segment spans residues 16–34 (WPLTGALSALLTTSGLTMW). The Mitochondrial intermembrane segment spans residues 35 to 40 (FHFHST). A helical transmembrane segment spans residues 41–66 (TLLLTGLLTNALTMYQWWRDVVREST). At 67-72 (YQGHHT) the chain is on the mitochondrial matrix side. Residues 73–105 (LPVQKGLRYGMILFITSEVFFFAGFFWAFYHSS) form a helical membrane-spanning segment. Over 106–128 (LAPTPQLGGHWPPTGIIPLNPLE) the chain is Mitochondrial intermembrane. The helical transmembrane segment at 129–152 (VPLLNTSVLLASGVSITWAHHSLM) threads the bilayer. Over 153-155 (ENN) the chain is Mitochondrial matrix. Residues 156-183 (RTQMIQALLITILLGIYFTLLQASEYIE) form a helical membrane-spanning segment. Residues 184–190 (APFTISD) are Mitochondrial intermembrane-facing. The chain crosses the membrane as a helical span at residues 191 to 223 (GIYGSTFFMATGFHGLHVIIGSTFLTVCLARQL). At 224–232 (LFHFTSKHH) the chain is on the mitochondrial matrix side. The chain crosses the membrane as a helical span at residues 233–256 (FGFEAAAWYWHFVDVVWLFLYVSI). Residues 257-261 (YWWGS) lie on the Mitochondrial intermembrane side of the membrane.

It belongs to the cytochrome c oxidase subunit 3 family. Component of the cytochrome c oxidase (complex IV, CIV), a multisubunit enzyme composed of 14 subunits. The complex is composed of a catalytic core of 3 subunits MT-CO1, MT-CO2 and MT-CO3, encoded in the mitochondrial DNA, and 11 supernumerary subunits COX4I, COX5A, COX5B, COX6A, COX6B, COX6C, COX7A, COX7B, COX7C, COX8 and NDUFA4, which are encoded in the nuclear genome. The complex exists as a monomer or a dimer and forms supercomplexes (SCs) in the inner mitochondrial membrane with NADH-ubiquinone oxidoreductase (complex I, CI) and ubiquinol-cytochrome c oxidoreductase (cytochrome b-c1 complex, complex III, CIII), resulting in different assemblies (supercomplex SCI(1)III(2)IV(1) and megacomplex MCI(2)III(2)IV(2)).

The protein resides in the mitochondrion inner membrane. It carries out the reaction 4 Fe(II)-[cytochrome c] + O2 + 8 H(+)(in) = 4 Fe(III)-[cytochrome c] + 2 H2O + 4 H(+)(out). Its function is as follows. Component of the cytochrome c oxidase, the last enzyme in the mitochondrial electron transport chain which drives oxidative phosphorylation. The respiratory chain contains 3 multisubunit complexes succinate dehydrogenase (complex II, CII), ubiquinol-cytochrome c oxidoreductase (cytochrome b-c1 complex, complex III, CIII) and cytochrome c oxidase (complex IV, CIV), that cooperate to transfer electrons derived from NADH and succinate to molecular oxygen, creating an electrochemical gradient over the inner membrane that drives transmembrane transport and the ATP synthase. Cytochrome c oxidase is the component of the respiratory chain that catalyzes the reduction of oxygen to water. Electrons originating from reduced cytochrome c in the intermembrane space (IMS) are transferred via the dinuclear copper A center (CU(A)) of subunit 2 and heme A of subunit 1 to the active site in subunit 1, a binuclear center (BNC) formed by heme A3 and copper B (CU(B)). The BNC reduces molecular oxygen to 2 water molecules using 4 electrons from cytochrome c in the IMS and 4 protons from the mitochondrial matrix. The chain is Cytochrome c oxidase subunit 3 (MT-CO3) from Pongo abelii (Sumatran orangutan).